We begin with the raw amino-acid sequence, 336 residues long: Glyceraldehyde-3-phosphate dehydrogenase (336 aa).

Residues 12–13 (RI), aspartate 34, and arginine 79 contribute to the NAD(+) site. D-glyceraldehyde 3-phosphate-binding positions include 150-152 (SCT), threonine 181, 210-211 (TG), and arginine 233. Cysteine 151 (nucleophile) is an active-site residue. Asparagine 315 contributes to the NAD(+) binding site.

This sequence belongs to the glyceraldehyde-3-phosphate dehydrogenase family. Homotetramer.

The protein resides in the cytoplasm. The enzyme catalyses D-glyceraldehyde 3-phosphate + phosphate + NAD(+) = (2R)-3-phospho-glyceroyl phosphate + NADH + H(+). It participates in carbohydrate degradation; glycolysis; pyruvate from D-glyceraldehyde 3-phosphate: step 1/5. In terms of biological role, involved in osmoadaptation. The chain is Glyceraldehyde-3-phosphate dehydrogenase (gpdA) from Emericella nidulans (strain FGSC A4 / ATCC 38163 / CBS 112.46 / NRRL 194 / M139) (Aspergillus nidulans).